A 539-amino-acid polypeptide reads, in one-letter code: MLCRLLLCECLLLITGYAHDDDWIDPTDMLNYDAASGTMRKSQVRSGTSEKKEVSPDSSEAEELSDCLHRLDSLTHKVDSCEKKKMKDYESQSNPVFRRYLNKILIEAGKLGLPDENKVEMRYDAEILLSRQTLLEIQKFLSGEEWKPGALDDALSDILINFKCHDSEAWKWQFEDYFGVDPYNVFMVLLCLLCLVVLVATELWTYVRWYTQMKRIFIISFLLSLAWNWIYLYKMAFAQHQANIAGMEPFDNLCAKKMDWTGSLWEWFTSSWTYKDDPCQKYYELLIVNPIWLVPPTKALAITFTNFVTEPLKHIGKGAGEFIKALMKEIPVLLQIPVLAILALAVLSFCYGAGRSVPMLRHFGGPDREPPRALEPDDRRRQKGLDYRLHGGAGDADFSYRGPAGSIEQGPYDKMHASKRDALRQRFHSGNKSPEVLRAFDLPDTEAQEHPEVVPSHKSPIMNTNLETGELPGESTPTEYSQSAKDVSGQVPSAGKSSPTVDKAQLKTDSECSPPGGCPPSKEAAVAAHGTEPVSSPCG.

The signal sequence occupies residues 1–18; the sequence is MLCRLLLCECLLLITGYA. Over 19-184 the chain is Lumenal; that stretch reads HDDDWIDPTD…EDYFGVDPYN (166 aa). The tract at residues 41 to 61 is disordered; it reads KSQVRSGTSEKKEVSPDSSEA. Residues 185-205 form a helical membrane-spanning segment; the sequence is VFMVLLCLLCLVVLVATELWT. The Cytoplasmic segment spans residues 206-215; the sequence is YVRWYTQMKR. Residues 216-236 form a helical membrane-spanning segment; the sequence is IFIISFLLSLAWNWIYLYKMA. The Lumenal portion of the chain corresponds to 237 to 329; the sequence is FAQHQANIAG…GEFIKALMKE (93 aa). A helical membrane pass occupies residues 330 to 350; the sequence is IPVLLQIPVLAILALAVLSFC. Residues 351–539 are Cytoplasmic-facing; sequence YGAGRSVPML…GTEPVSSPCG (189 aa). The interval 361 to 410 is disordered; it reads RHFGGPDREPPRALEPDDRRRQKGLDYRLHGGAGDADFSYRGPAGSIEQG. Residues 364–389 are compositionally biased toward basic and acidic residues; it reads GGPDREPPRALEPDDRRRQKGLDYRL. 3 positions are modified to phosphoserine: S429, S433, and S459. The disordered stretch occupies residues 444–539; sequence DTEAQEHPEV…GTEPVSSPCG (96 aa). Residues 475-485 show a composition bias toward polar residues; sequence STPTEYSQSAK. A Phosphothreonine modification is found at T476. Phosphoserine occurs at positions 498, 513, and 521. Low complexity predominate over residues 512–521; it reads CSPPGGCPPS.

The protein belongs to the chloride channel MCLC family. In terms of assembly, homomultimers. Interacts with mitochondrial protein PIGBOS1 (via C-terminus); the interaction occurs at the mitochondria-associated endoplasmic reticulum (ER) membrane, a zone of contact between the ER and mitochondrial membranes, but does not appear to play a role in ER-mitochondria tethering and is not affected by ER stress. Interacts with CALR. Expressed in cerebellum (at protein level).

Its subcellular location is the endoplasmic reticulum membrane. It carries out the reaction chloride(in) = chloride(out). The enzyme catalyses bromide(in) = bromide(out). The catalysed reaction is nitrate(in) = nitrate(out). It catalyses the reaction fluoride(in) = fluoride(out). Its activity is regulated as follows. Activated by membrane phosphatidylinositol 4,5-bisphosphate (PI(4,5)P2, PIP2). Inhibited by lumenal Ca(2+). Anion-selective channel with Ca(2+)-dependent and voltage-independent gating. Permeable to small monovalent anions with selectivity for bromide &gt; chloride &gt; nitrate &gt; fluoride. Operates in the endoplasmic reticulum (ER) membrane where it mediates chloride efflux to compensate for the loss of positive charges from the ER lumen upon Ca(2+) release. Contributes to the maintenance of ER Ca(2+) pools and activation of unfolded protein response to prevent accumulation of misfolded proteins in the ER lumen. Particularly involved in ER homeostasis mechanisms underlying motor neurons and retinal photoreceptors survival. The protein is Chloride channel CLIC-like protein 1 of Mus musculus (Mouse).